The primary structure comprises 147 residues: Ribonuclease pancreatic gamma-type (147 aa).

A signal peptide spans 1-25; the sequence is MGLEKSFLLFSLLVLVLGWVQPSLG. Residues Lys-35 and Arg-38 each coordinate substrate. The active-site Proton acceptor is His-40. 4 cysteine pairs are disulfide-bonded: Cys-54/Cys-112, Cys-68/Cys-123, Cys-86/Cys-138, and Cys-93/Cys-100. Substrate-binding positions include 69–73, Lys-94, and Arg-113; that span reads KPMNT. The active-site Proton donor is His-142.

The protein belongs to the pancreatic ribonuclease family. As to quaternary structure, monomer.

It localises to the secreted. The enzyme catalyses an [RNA] containing cytidine + H2O = an [RNA]-3'-cytidine-3'-phosphate + a 5'-hydroxy-ribonucleotide-3'-[RNA].. It carries out the reaction an [RNA] containing uridine + H2O = an [RNA]-3'-uridine-3'-phosphate + a 5'-hydroxy-ribonucleotide-3'-[RNA].. Functionally, endonuclease that catalyzes the cleavage of RNA on the 3' side of pyrimidine nucleotides. Acts on single-stranded and double-stranded RNA. The sequence is that of Ribonuclease pancreatic gamma-type from Rattus rattus (Black rat).